Here is a 329-residue protein sequence, read N- to C-terminus: COP9 signalosome complex subunit 6 (329 aa).

One can recognise an MPN domain in the interval 44–175; that stretch reads TRVKAQAACS…VTIYESELHV (132 aa).

It belongs to the peptidase M67A family. CSN6 subfamily. Component of the CSN complex, probably composed of CSN1, CSN2, CSN3, CSN4, CSN5, CSN6, CSN7 and CSN8.

Functionally, component of the COP9 signalosome complex (CSN), a complex involved in various cellular and developmental processes such as photomorphogenesis and response to hormones. The CSN complex is an essential regulator of the ubiquitin (Ubl) conjugation pathway by mediating the deneddylation of the cullin subunits of SCF-type E3 ligase complexes, leading to decrease the Ubl ligase activity of SCF. Involved in early response to iron deficiency. The chain is COP9 signalosome complex subunit 6 from Oryza sativa subsp. japonica (Rice).